A 390-amino-acid chain; its full sequence is Chorismate synthase 2 (390 aa).

NADP(+)-binding residues include arginine 39 and arginine 45. Residues 132 to 134 (RSS), 253 to 254 (NA), glycine 298, 313 to 317 (KPIPT), and arginine 339 contribute to the FMN site.

Belongs to the chorismate synthase family. Homotetramer. It depends on FMNH2 as a cofactor.

It catalyses the reaction 5-O-(1-carboxyvinyl)-3-phosphoshikimate = chorismate + phosphate. Its pathway is metabolic intermediate biosynthesis; chorismate biosynthesis; chorismate from D-erythrose 4-phosphate and phosphoenolpyruvate: step 7/7. In terms of biological role, catalyzes the anti-1,4-elimination of the C-3 phosphate and the C-6 proR hydrogen from 5-enolpyruvylshikimate-3-phosphate (EPSP) to yield chorismate, which is the branch point compound that serves as the starting substrate for the three terminal pathways of aromatic amino acid biosynthesis. This reaction introduces a second double bond into the aromatic ring system. The chain is Chorismate synthase 2 from Bacillus cereus (strain ATCC 10987 / NRS 248).